Consider the following 654-residue polypeptide: Beta-mannosyltransferase 2 (654 aa).

The Cytoplasmic segment spans residues 1-37 (MLAWLRHRIRSYNTSTYSSILPSASFGKVYKIGTKLN). A helical transmembrane segment spans residues 38 to 58 (FTLLALCLLLACSVFFNYFYL). Over 59 to 654 (ADNNGLDIDT…ANGNGKGSSS (596 aa)) the chain is Extracellular.

It belongs to the BMT family.

The protein resides in the membrane. Beta-mannosyltransferase involved in cell wall biosynthesis. Required for the addition of beta-mannose to the acid-labile fraction of cell wall phosphopeptidomannan. The sequence is that of Beta-mannosyltransferase 2 (RHD1) from Candida albicans (strain SC5314 / ATCC MYA-2876) (Yeast).